We begin with the raw amino-acid sequence, 782 residues long: MEIESGSYQNAKKESWRTVLTLAYQSLGVVYGDLSISPLYVYKSTFAEDIHHSESNEEIFGVLSFIFWTITLVPLLKYVFIVLRADDNGEGGTFALYSLLCRHARVNSLPSCQLADEQLIEYKTDSIGSSSMPQSGFAASLKSTLEKHGVLQKILLVLALIGTCMVIGDGVLTPAISVFSAVSGVELSMSKEHHKYIELPAACVILIGLFALQHYGTHRVGFLFAPVILLWLMCISAIGVYNIFHWNPHVYQALSPYYMYKFLKKTQSRGWMSLGGILLCITGSEAMFADLGHFSQLSIKIAFTSLVYPSLILAYMGQAAYLSQHHIIESEYNIGFYVSVPERLRWPVLVIAILAAVVGSQAIITGTFSIIKQCSALGCFPKVKIVHTSSKIHGQIYIPEINWILMVLCLAVTIGFRDTKRLGNASGLAVITVMLVTTCLMSLVIVLCWHKSVIFAIVFVVFFGTIESLYFSASLIKFLEGAWVPIALAFCFLLAMCTWHYGTLKRYEYDVQNKVSVNWLLSLSQTLGIARVRGLGLIHTELVSGVPAIFSHFVTNLPAFHQVLVFLCVKSVPVPHVRPQERFLVGRIGPKEFRIYRCIVRFGYRDVHKDDFEFEGDLVCSIAEFIRTEAETAATAAETNGEDDDRMSVVGTCSTYMQGIEDHYESDIDDPDKPGTSEIRSPKPKKKSKSKVKKRVRFVVPETPKIEKETRQELMELTEAREGGVAYIMGNAYMKAKPGSGLLKRLAINIGYEFLRRNTRGPRNMLTSPHASTLEVGMIYNV.

The Cytoplasmic portion of the chain corresponds to 1 to 18 (MEIESGSYQNAKKESWRT). The chain crosses the membrane as a helical span at residues 19–39 (VLTLAYQSLGVVYGDLSISPL). Over 40 to 61 (YVYKSTFAEDIHHSESNEEIFG) the chain is Extracellular. A helical transmembrane segment spans residues 62–82 (VLSFIFWTITLVPLLKYVFIV). Over 83–153 (LRADDNGEGG…TLEKHGVLQK (71 aa)) the chain is Cytoplasmic. The helical transmembrane segment at 154 to 174 (ILLVLALIGTCMVIGDGVLTP) threads the bilayer. Residues 175-195 (AISVFSAVSGVELSMSKEHHK) are Extracellular-facing. Residues 196 to 216 (YIELPAACVILIGLFALQHYG) traverse the membrane as a helical segment. Topologically, residues 217 to 219 (THR) are cytoplasmic. A helical membrane pass occupies residues 220–240 (VGFLFAPVILLWLMCISAIGV). Residues 241-270 (YNIFHWNPHVYQALSPYYMYKFLKKTQSRG) are Extracellular-facing. A helical membrane pass occupies residues 271-291 (WMSLGGILLCITGSEAMFADL). At 292 to 296 (GHFSQ) the chain is on the cytoplasmic side. Residues 297-317 (LSIKIAFTSLVYPSLILAYMG) form a helical membrane-spanning segment. At 318-347 (QAAYLSQHHIIESEYNIGFYVSVPERLRWP) the chain is on the extracellular side. A helical transmembrane segment spans residues 348 to 368 (VLVIAILAAVVGSQAIITGTF). At 369–395 (SIIKQCSALGCFPKVKIVHTSSKIHGQ) the chain is on the cytoplasmic side. A helical membrane pass occupies residues 396–416 (IYIPEINWILMVLCLAVTIGF). Topologically, residues 417–421 (RDTKR) are extracellular. 2 consecutive transmembrane segments (helical) span residues 422-442 (LGNASGLAVITVMLVTTCLMS) and 443-463 (LVIVLCWHKSVIFAIVFVVFF). The Extracellular segment spans residues 464–474 (GTIESLYFSAS). Residues 475 to 495 (LIKFLEGAWVPIALAFCFLLA) form a helical membrane-spanning segment. At 496–782 (MCTWHYGTLK…TLEVGMIYNV (287 aa)) the chain is on the cytoplasmic side. Residues 664–675 (YESDIDDPDKPG) are compositionally biased toward basic and acidic residues. The disordered stretch occupies residues 664 to 693 (YESDIDDPDKPGTSEIRSPKPKKKSKSKVK). The span at 682–693 (PKPKKKSKSKVK) shows a compositional bias: basic residues.

It belongs to the HAK/KUP transporter (TC 2.A.72.3) family.

The protein resides in the cell membrane. Its function is as follows. Probable potassium transporter. The sequence is that of Potassium transporter 6 (POT6) from Arabidopsis thaliana (Mouse-ear cress).